Here is a 366-residue protein sequence, read N- to C-terminus: Phenylalanine--tRNA ligase alpha subunit (366 aa).

E259 contributes to the Mg(2+) binding site.

Belongs to the class-II aminoacyl-tRNA synthetase family. Phe-tRNA synthetase alpha subunit type 1 subfamily. As to quaternary structure, tetramer of two alpha and two beta subunits. It depends on Mg(2+) as a cofactor.

It is found in the cytoplasm. It carries out the reaction tRNA(Phe) + L-phenylalanine + ATP = L-phenylalanyl-tRNA(Phe) + AMP + diphosphate + H(+). The protein is Phenylalanine--tRNA ligase alpha subunit of Erythrobacter litoralis (strain HTCC2594).